The sequence spans 248 residues: Triosephosphate isomerase (248 aa).

9–11 (NWK) is a substrate binding site. His94 acts as the Electrophile in catalysis. Glu166 functions as the Proton acceptor in the catalytic mechanism. Residues Gly172, Ser212, and 233-234 (GG) contribute to the substrate site.

Belongs to the triosephosphate isomerase family. As to quaternary structure, homodimer.

It localises to the cytoplasm. It catalyses the reaction D-glyceraldehyde 3-phosphate = dihydroxyacetone phosphate. It functions in the pathway carbohydrate biosynthesis; gluconeogenesis. Its pathway is carbohydrate degradation; glycolysis; D-glyceraldehyde 3-phosphate from glycerone phosphate: step 1/1. Functionally, involved in the gluconeogenesis. Catalyzes stereospecifically the conversion of dihydroxyacetone phosphate (DHAP) to D-glyceraldehyde-3-phosphate (G3P). This chain is Triosephosphate isomerase, found in Clostridium perfringens (strain ATCC 13124 / DSM 756 / JCM 1290 / NCIMB 6125 / NCTC 8237 / Type A).